A 233-amino-acid chain; its full sequence is Biosynthetic peptidoglycan transglycosylase (233 aa).

A helical membrane pass occupies residues 7–27 (VFTWLAKLVLGLFFASILSVV).

Belongs to the glycosyltransferase 51 family.

The protein localises to the cell inner membrane. The enzyme catalyses [GlcNAc-(1-&gt;4)-Mur2Ac(oyl-L-Ala-gamma-D-Glu-L-Lys-D-Ala-D-Ala)](n)-di-trans,octa-cis-undecaprenyl diphosphate + beta-D-GlcNAc-(1-&gt;4)-Mur2Ac(oyl-L-Ala-gamma-D-Glu-L-Lys-D-Ala-D-Ala)-di-trans,octa-cis-undecaprenyl diphosphate = [GlcNAc-(1-&gt;4)-Mur2Ac(oyl-L-Ala-gamma-D-Glu-L-Lys-D-Ala-D-Ala)](n+1)-di-trans,octa-cis-undecaprenyl diphosphate + di-trans,octa-cis-undecaprenyl diphosphate + H(+). It participates in cell wall biogenesis; peptidoglycan biosynthesis. In terms of biological role, peptidoglycan polymerase that catalyzes glycan chain elongation from lipid-linked precursors. The polypeptide is Biosynthetic peptidoglycan transglycosylase (Shewanella oneidensis (strain ATCC 700550 / JCM 31522 / CIP 106686 / LMG 19005 / NCIMB 14063 / MR-1)).